Consider the following 134-residue polypeptide: Profilin-2 (134 aa).

Cys-13 and Cys-118 form a disulfide bridge. An Involved in PIP2 interaction motif is present at residues 84 to 100 (AVIRGKKGSGGITIKKT). At Thr-114 the chain carries Phosphothreonine.

Belongs to the profilin family. As to quaternary structure, occurs in many kinds of cells as a complex with monomeric actin in a 1:1 ratio. In terms of processing, phosphorylated by MAP kinases.

It localises to the cytoplasm. Its subcellular location is the cytoskeleton. Its function is as follows. Binds to actin and affects the structure of the cytoskeleton. At high concentrations, profilin prevents the polymerization of actin, whereas it enhances it at low concentrations. This chain is Profilin-2, found in Olea europaea (Common olive).